The primary structure comprises 197 residues: ATP synthase subunit delta', mitochondrial (197 aa).

The N-terminal 19 residues, Met-1 to Phe-19, are a transit peptide targeting the mitochondrion.

It belongs to the ATPase epsilon chain family. In terms of assembly, F-type ATPases have 2 components, CF(1) - the catalytic core - and CF(0) - the membrane proton channel. CF(1) has five subunits: alpha(3), beta(3), gamma(1), delta(1), epsilon(1). CF(0) has three main subunits: a, b and c.

The protein localises to the mitochondrion. It is found in the mitochondrion inner membrane. Mitochondrial membrane ATP synthase (F(1)F(0) ATP synthase or Complex V) produces ATP from ADP in the presence of a proton gradient across the membrane which is generated by electron transport complexes of the respiratory chain. F-type ATPases consist of two structural domains, F(1) - containing the extramembraneous catalytic core, and F(0) - containing the membrane proton channel, linked together by a central stalk and a peripheral stalk. During catalysis, ATP turnover in the catalytic domain of F(1) is coupled via a rotary mechanism of the central stalk subunits to proton translocation. Part of the complex F(1) domain and of the central stalk which is part of the complex rotary element. Rotation of the central stalk against the surrounding alpha(3)beta(3) subunits leads to hydrolysis of ATP in three separate catalytic sites on the beta subunits. This chain is ATP synthase subunit delta', mitochondrial, found in Pisum sativum (Garden pea).